Here is a 97-residue protein sequence, read N- to C-terminus: Small ribosomal subunit protein uS17 (97 aa).

The segment at 1 to 20 (MSEATVNDNAAVKNEKGARK) is disordered.

The protein belongs to the universal ribosomal protein uS17 family. As to quaternary structure, part of the 30S ribosomal subunit.

One of the primary rRNA binding proteins, it binds specifically to the 5'-end of 16S ribosomal RNA. The chain is Small ribosomal subunit protein uS17 from Corynebacterium jeikeium (strain K411).